The sequence spans 180 residues: Large ribosomal subunit protein uL6 (180 aa).

It belongs to the universal ribosomal protein uL6 family. Part of the 50S ribosomal subunit.

Functionally, this protein binds to the 23S rRNA, and is important in its secondary structure. It is located near the subunit interface in the base of the L7/L12 stalk, and near the tRNA binding site of the peptidyltransferase center. This is Large ribosomal subunit protein uL6 from Dictyoglomus thermophilum (strain ATCC 35947 / DSM 3960 / H-6-12).